A 704-amino-acid chain; its full sequence is Boron transporter 1 (704 aa).

The Cytoplasmic segment spans residues 1–35 (MEETFVPFEGIKNDLKGRLMCYKQDWTGGFKAGFR). Residues 36–56 (ILAPTTYIFFASAIPVISFGE) form a helical membrane-spanning segment. Over 57–75 (QLERSTDGVLTAVQTLAST) the chain is Extracellular. Residues 76–96 (AICGMIHSIIGGQPLLILGVA) form a helical membrane-spanning segment. Residues 97 to 120 (EPTVIMYTFMFNFAKARPELGRDL) lie on the Cytoplasmic side of the membrane. Residues 121-141 (FLAWSGWVCVWTALMLFVLAI) traverse the membrane as a helical segment. Residues 142-155 (CGACSIINRFTRVA) lie on the Extracellular side of the membrane. Residues 156–176 (GELFGLLIAMLFMQQAIKGLV) form a helical membrane-spanning segment. At 177-195 (DEFRIPERENQKLKEFLPS) the chain is on the cytoplasmic side. A helical membrane pass occupies residues 196–216 (WRFANGMFALVLSFGLLLTGL). Topologically, residues 217–233 (RSRKARSWRYGTGWLRS) are extracellular. A helical membrane pass occupies residues 234 to 254 (LIADYGVPLMVLVWTGVSYIP). Residues 255–289 (AGDVPKGIPRRLFSPNPWSPGAYGNWTVVKEMLDV) lie on the Cytoplasmic side of the membrane. Residues 290-310 (PIVYIIGAFIPASMIAVLYYF) form a helical membrane-spanning segment. At 311-337 (DHSVASQLAQQKEFNLRKPSSYHYDLL) the chain is on the extracellular side. A helical transmembrane segment spans residues 338-358 (LLGFLTLMCGLLGVPPSNGVI). At 359–480 (PQSPMHTKSL…STMVGGCVAA (122 aa)) the chain is on the cytoplasmic side. The chain crosses the membrane as a helical span at residues 481 to 501 (MPILKMIPTSVLWGYFAFMAI). Over 502–557 (ESLPGNQFWERILLLFTAPSRRFKVLEDYHATFVETVPFKTIAMFTLFQTTYLLIC) the chain is Extracellular. A helical transmembrane segment spans residues 558–578 (FGLTWIPIAGVMFPLMIMFLI). The Cytoplasmic portion of the chain corresponds to 579 to 704 (PVRQYLLPRF…RSPLNQSSSN (126 aa)). The interval 641-704 (EFRHTSSPKV…RSPLNQSSSN (64 aa)) is disordered. Over residues 647 to 664 (SPKVTSSSSTPVNNRSLS) the composition is skewed to low complexity.

Belongs to the anion exchanger (TC 2.A.31.3) family. As to expression, expressed in proximal side of various root cells, notably in the columella, lateral root cap, epidermis and endodermis in tip and elongation zones of the root. Also detected in the epidermis, cortex, endodermis, and stele cells of the root hair zone. Observed in cotyledons and hypocotyls.

The protein resides in the cell membrane. It localises to the endosome membrane. Its subcellular location is the vacuole membrane. Functionally, efflux-type boron (B) transporter for xylem loading, responsive of boron translocation from roots to shoots under boron limitation. Boron is essential for maintaining the integrity of plants cell walls. The protein is Boron transporter 1 of Arabidopsis thaliana (Mouse-ear cress).